Here is a 158-residue protein sequence, read N- to C-terminus: Small ribosomal subunit protein uS9 (158 aa).

This sequence belongs to the universal ribosomal protein uS9 family.

The protein is Small ribosomal subunit protein uS9 of Rhodopseudomonas palustris (strain HaA2).